The following is a 203-amino-acid chain: Potassium channel Cha6605_3372 (203 aa).

At 1 to 7 (MVEAPEQ) the chain is on the cytoplasmic side. A helical membrane pass occupies residues 8-31 (SETGRIEAFSDGVFAIAITLLVLE). Positions 12–18 (RIEAFSD) match the RxxxFSD motif motif. The Extracellular segment spans residues 32 to 52 (IKVPQHKIVETVGLVSSLLSL). Positions 37 to 42 (HKIVET) are short helix H1. The short helix H2 stretch occupies residues 44–50 (GLVSSLL). The chain crosses the membrane as a helical span at residues 53–78 (WPSYLAFLTSFASILVMWVNHHRIFS). The Cytoplasmic segment spans residues 79 to 84 (LVARTD). A helical transmembrane segment spans residues 85–110 (HAFFYWNGLLLMLVTFVPFPTALLAE). At 111-117 (YLIHPQA) the chain is on the extracellular side. A helical membrane pass occupies residues 118–142 (RVAASVYAGIFLAIAIVFNRLWKHA). The Cytoplasmic segment spans residues 143–154 (ATADRLLAQKAD). Residues 155 to 181 (RHEVDAITKQYRFGPGLYLVAFALSFI) form a helical membrane-spanning segment. The Extracellular portion of the chain corresponds to 182-183 (SV). Residues 184-199 (WLSVGVCFVLAIYFAL) traverse the membrane as a helical segment. At 200–203 (RSNA) the chain is on the cytoplasmic side.

The protein belongs to the TMEM175 family. As to quaternary structure, homotetramer.

It localises to the membrane. The enzyme catalyses K(+)(in) = K(+)(out). In terms of biological role, potassium channel. The channel is permeable for K(+), Rb(+) and Cs(+), while it is unable to conduct Na(+). This Chamaesiphon minutus (strain ATCC 27169 / PCC 6605) protein is Potassium channel Cha6605_3372.